A 122-amino-acid polypeptide reads, in one-letter code: Large ribosomal subunit protein uL14c (122 aa).

Belongs to the universal ribosomal protein uL14 family. Part of the 50S ribosomal subunit.

The protein localises to the plastid. The protein resides in the chloroplast. Its function is as follows. Binds to 23S rRNA. The sequence is that of Large ribosomal subunit protein uL14c from Pleurastrum terricola (Filamentous green alga).